Reading from the N-terminus, the 1009-residue chain is Rho-type GTPase-activating protein 2 (1009 aa).

LIM zinc-binding domains lie at Ser11 to Asp68 and Lys69 to Lys129. The segment covering Lys143 to Val155 has biased composition (basic and acidic residues). Disordered regions lie at residues Lys143–Ser228, Thr358–Ser433, Thr449–Asp608, Thr664–Lys709, and Gln723–Pro780. Residues Thr162–Val196 are compositionally biased toward polar residues. Basic and acidic residues predominate over residues Asp212–Ser222. Composition is skewed to polar residues over residues Lys363–Thr385 and Leu399–Asp414. Basic residues predominate over residues Asn481–Pro491. Polar residues-rich tracts occupy residues Ser493 to Asn510 and Gln522 to Gly553. Residues Thr664–Glu682 show a composition bias toward basic and acidic residues. Polar residues-rich tracts occupy residues Asn683 to Ser707 and Glu728 to Ile749. The residue at position 763 (Ser763) is a Phosphoserine. Positions Ser788 to Phe1006 constitute a Rho-GAP domain.

Functionally, GTPase-activating protein (GAP) for CDC42 and/or RHO1. This Saccharomyces cerevisiae (strain ATCC 204508 / S288c) (Baker's yeast) protein is Rho-type GTPase-activating protein 2 (RGA2).